The following is a 393-amino-acid chain: Stearoyl-[acyl-carrier-protein] 9-desaturase, chloroplastic (393 aa).

The transit peptide at 1 to 30 (MALNINGVSLKSHKMLPFPCSSARSERVFM) directs the protein to the chloroplast. Residues Glu135, Glu173, His176, Glu259, and His262 each contribute to the Fe cation site.

It belongs to the fatty acid desaturase type 2 family. As to quaternary structure, homodimer. Requires Fe(2+) as cofactor.

Its subcellular location is the plastid. The protein localises to the chloroplast. It carries out the reaction octadecanoyl-[ACP] + 2 reduced [2Fe-2S]-[ferredoxin] + O2 + 2 H(+) = (9Z)-octadecenoyl-[ACP] + 2 oxidized [2Fe-2S]-[ferredoxin] + 2 H2O. The protein operates within lipid metabolism; fatty acid metabolism. Functionally, converts stearoyl-ACP to oleoyl-ACP by introduction of a cis double bond between carbons 9 and 10 of the acyl chain. In Solanum tuberosum (Potato), this protein is Stearoyl-[acyl-carrier-protein] 9-desaturase, chloroplastic.